Here is a 158-residue protein sequence, read N- to C-terminus: ATP synthase subunit b', chloroplastic (158 aa).

Residues alanine 25–phenylalanine 45 traverse the membrane as a helical segment.

Belongs to the ATPase B chain family. As to quaternary structure, F-type ATPases have 2 components, F(1) - the catalytic core - and F(0) - the membrane proton channel. F(1) has five subunits: alpha(3), beta(3), gamma(1), delta(1), epsilon(1). F(0) has four main subunits: a(1), b(1), b'(1) and c(10-14). The alpha and beta chains form an alternating ring which encloses part of the gamma chain. F(1) is attached to F(0) by a central stalk formed by the gamma and epsilon chains, while a peripheral stalk is formed by the delta, b and b' chains.

It is found in the plastid. The protein localises to the chloroplast thylakoid membrane. In terms of biological role, f(1)F(0) ATP synthase produces ATP from ADP in the presence of a proton or sodium gradient. F-type ATPases consist of two structural domains, F(1) containing the extramembraneous catalytic core and F(0) containing the membrane proton channel, linked together by a central stalk and a peripheral stalk. During catalysis, ATP synthesis in the catalytic domain of F(1) is coupled via a rotary mechanism of the central stalk subunits to proton translocation. Its function is as follows. Component of the F(0) channel, it forms part of the peripheral stalk, linking F(1) to F(0). The b'-subunit is a diverged and duplicated form of b found in plants and photosynthetic bacteria. The chain is ATP synthase subunit b', chloroplastic from Gracilaria tenuistipitata var. liui (Red alga).